A 366-amino-acid chain; its full sequence is Spermidine/putrescine import ATP-binding protein PotA (366 aa).

An ABC transporter domain is found at 8-239 (IRFENVTKQF…PINKFVADFI (232 aa)). An ATP-binding site is contributed by 41–48 (GPSGCGKT).

The protein belongs to the ABC transporter superfamily. Spermidine/putrescine importer (TC 3.A.1.11.1) family. In terms of assembly, the complex is composed of two ATP-binding proteins (PotA), two transmembrane proteins (PotB and PotC) and a solute-binding protein (PotD).

The protein localises to the cell membrane. The catalysed reaction is ATP + H2O + polyamine-[polyamine-binding protein]Side 1 = ADP + phosphate + polyamineSide 2 + [polyamine-binding protein]Side 1.. In terms of biological role, part of the ABC transporter complex PotABCD involved in spermidine/putrescine import. Responsible for energy coupling to the transport system. The sequence is that of Spermidine/putrescine import ATP-binding protein PotA from Listeria monocytogenes serotype 4b (strain F2365).